The chain runs to 827 residues: SH3-containing GRB2-like protein 3-interacting protein 1 (827 aa).

Disordered stretches follow at residues 1–116 (MMEG…SHKK), 143–199 (IGNI…ALAP), and 223–278 (IWGS…QAAT). 2 stretches are compositionally biased toward basic and acidic residues: residues 16-32 (RKKE…DRDG) and 40-53 (LPYH…REGG). Residues S78, S104, S105, S107, S149, S151, S156, and S169 each carry the phosphoserine modification. T180 and T182 each carry phosphothreonine. Residue S236 is modified to Phosphoserine. Over residues 245–260 (TGTPPPLPPKTVPATP) the composition is skewed to pro residues. T247 and T259 each carry phosphothreonine. S265, S287, S289, S300, S316, and S319 each carry phosphoserine. The span at 265 to 276 (SPLTVATGNDQA) shows a compositional bias: polar residues. A disordered region spans residues 315–505 (FSDASPEHVT…IAPLARAEST (191 aa)). Positions 319 to 333 (SPEHVTPELTPREKV) are enriched in basic and acidic residues. 3 positions are modified to phosphothreonine: T324, T328, and T335. The span at 335-345 (TPPAASDIPAD) shows a compositional bias: low complexity. The span at 346-369 (SPTPGPPGPPGSAGPPGPPGPRNV) shows a compositional bias: pro residues. Phosphoserine is present on S371. Residues 377-392 (EVQKKVAEQTFIKDDY) show a composition bias toward basic and acidic residues. A Phosphoserine modification is found at S398. T409 is modified (phosphothreonine). Residues 436–455 (ASGASSPARPATPLVPCSCS) show a composition bias toward low complexity. Residues 456 to 474 (TPPPPPPRPPSRPKLPPGK) are compositionally biased toward pro residues. A compositionally biased stretch (low complexity) spans 481-491 (SRPFSPPIHSS). Phosphoserine is present on S485. An MHD domain is found at 558 to 826 (TLPVAAAFTE…RFAAGKYLAD (269 aa)). 4 interaction with DPF motifs-containing proteins regions span residues 560-566 (PVAAAFT), 592-594 (SFP), 666-669 (TYYN), and 812-817 (SLIKKR). A necessary and sufficient to mediate interaction with CANX region spans residues 648-827 (MPNLMTHLKK…FAAGKYLADN (180 aa)).

In terms of assembly, interacts with proteins essential or regulating the formation of functional clathrin-coated pits. Interacts with CANX. Interacts with AP2A1. Interacts with EPS15. Interacts with SH3GL3. Interacts with AMPH. Interacts with ITSN1 (via SH3 domains). Interacts with and REPS1. As to expression, specifically expressed in brain. Also detected at lower levels in spleen and adipose tissue.

It localises to the membrane. The protein localises to the clathrin-coated pit. In terms of biological role, may function in clathrin-mediated endocytosis. Has both a membrane binding/tubulating activity and the ability to recruit proteins essential to the formation of functional clathrin-coated pits. Has a preference for membranes enriched in phosphatidylserine and phosphoinositides and is required for the endocytosis of the transferrin receptor. May also bind tubulin. May play a role in the regulation of energy homeostasis. In Psammomys obesus (Fat sand rat), this protein is SH3-containing GRB2-like protein 3-interacting protein 1 (SGIP1).